Reading from the N-terminus, the 757-residue chain is MDVNPTLLFLKVPAQNAISTTFPYTGDPPYSHGTGTGYTMDTVNRTHQYSEKGRWTTNTETGAPQLNPIDGPLPEDNEPSGYAQTDCVLEAMAFLEESHPGIFENSCIETMEVVQQTRVDKLTQGRQTYDWTLNRNQPAATALANTIEVFRSNGLTANESGRLIDFLKDVMESMKKEEMGITTHFQRKRRVRDNMTKKMITQRTIGKKKQRLNKRSYLIRALTLNTMTKDAERGKLKRRAIATPGMQIRGFVYFVETLARSICEKLEQSGLPVGGNEKKAKLANVVRKMMTNSQDTELSFTITGDNTKWNENQNPRMFLAMITYMTRNQPEWFRNVLSIAPIMFSNKMARLGKGYMFESKSMKLRTQIPAEMLASIDLKYFNDSTRKKIEKIRPLLIEGTASLSPGMMMGMFNMLSTVLGVSILNLGQKRYTKTTYWWDGLQSSDDFALIVNAPNHEGIQAGVDRFYRTCKLLGINMSKKKSYINRTGTFEFTSFFYRYGFVANFSMELPSFGVSGINESADMSIGVTVIKNNMINNDLGPATAQMALQLFIKDYRYTYRCHRGDTQIQTRRSFEIKKLWEQTRSKAGLLVSDGGPNLYNIRNLHIPEVCLKWELMDEDYQGRLCNPLNPFVSHKEIESMNNAVMMPAHGPAKNMEYDAVATTHSWIPKRNRSILNTSQRGVLEDEQMYQRCCNLFEKFFPSSSYRRPVGISSMVEAMVSRARIDARIDFESGRIKKEEFTEIMKICSTIEELRRQK.

The tract at residues 53–82 is disordered; sequence GRWTTNTETGAPQLNPIDGPLPEDNEPSGY. Over residues 55–64 the composition is skewed to polar residues; the sequence is WTTNTETGAP. 2 short sequence motifs (nuclear localization signal) span residues 187–195 and 203–216; these read RKRRVRDNM and RTIGKKKQRLNKRS. Residues 249–256 form a promoter-binding site region; the sequence is RGFVYFVE. Positions 286-483 constitute a RdRp catalytic domain; sequence VRKMMTNSQD…GINMSKKKSY (198 aa). A required for interaction with human PKP2 region spans residues 493–757; the sequence is TSFFYRYGFV…STIEELRRQK (265 aa).

The protein belongs to the influenza viruses polymerase PB1 family. In terms of assembly, influenza RNA polymerase is composed of three subunits: PB1, PB2 and PA. Interacts (via N-terminus) with PA (via C-terminus). Interacts (via C-terminus) with PB2 (via N-terminus); this interaction is essential for transcription initiation. Interacts (via C-terminus) with human PKP2 (via N-terminus); the interaction competitively inhibits the interaction between the RNA polymerase subunits PB1 and PB2. In terms of processing, phosphorylated by host PRKCA.

The protein localises to the host nucleus. Its subcellular location is the host cytoplasm. It catalyses the reaction RNA(n) + a ribonucleoside 5'-triphosphate = RNA(n+1) + diphosphate. In terms of biological role, RNA-dependent RNA polymerase which is responsible for replication and transcription of virus RNA segments. The transcription of viral mRNAs occurs by a unique mechanism called cap-snatching. 5' methylated caps of cellular mRNAs are cleaved after 10-13 nucleotides by PA. In turn, these short capped RNAs are used as primers by PB1 for transcription of viral mRNAs. During virus replication, PB1 initiates RNA synthesis and copy vRNA into complementary RNA (cRNA) which in turn serves as a template for the production of more vRNAs. The chain is RNA-directed RNA polymerase catalytic subunit from Aves (Human).